The sequence spans 278 residues: HTH-type transcriptional activator RhaS (278 aa).

An HTH araC/xylS-type domain is found at 174 to 272 (NQLMAWLEDH…NWSPRDIRQG (99 aa)). DNA-binding regions (H-T-H motif) lie at residues 191-212 (EAVA…KQHT) and 239-262 (VTEI…RREF).

In terms of assembly, binds DNA as a dimer.

The protein resides in the cytoplasm. Its function is as follows. Activates expression of the rhaBAD and rhaT operons. This Salmonella arizonae (strain ATCC BAA-731 / CDC346-86 / RSK2980) protein is HTH-type transcriptional activator RhaS.